The following is a 267-amino-acid chain: Thiazole synthase (267 aa).

K101 functions as the Schiff-base intermediate with DXP in the catalytic mechanism. 1-deoxy-D-xylulose 5-phosphate is bound by residues G162, 188 to 189 (AG), and 210 to 211 (NT). The interval 247 to 267 (HASPSSPAAGVPCLPDPEVPV) is disordered.

It belongs to the ThiG family. In terms of assembly, homotetramer. Forms heterodimers with either ThiH or ThiS.

It is found in the cytoplasm. It catalyses the reaction [ThiS sulfur-carrier protein]-C-terminal-Gly-aminoethanethioate + 2-iminoacetate + 1-deoxy-D-xylulose 5-phosphate = [ThiS sulfur-carrier protein]-C-terminal Gly-Gly + 2-[(2R,5Z)-2-carboxy-4-methylthiazol-5(2H)-ylidene]ethyl phosphate + 2 H2O + H(+). The protein operates within cofactor biosynthesis; thiamine diphosphate biosynthesis. Its function is as follows. Catalyzes the rearrangement of 1-deoxy-D-xylulose 5-phosphate (DXP) to produce the thiazole phosphate moiety of thiamine. Sulfur is provided by the thiocarboxylate moiety of the carrier protein ThiS. In vitro, sulfur can be provided by H(2)S. This is Thiazole synthase from Deinococcus geothermalis (strain DSM 11300 / CIP 105573 / AG-3a).